The chain runs to 336 residues: Holliday junction branch migration complex subunit RuvB (336 aa).

The interval 4-184 (ADRLISASGG…FGIVQRLEFY (181 aa)) is large ATPase domain (RuvB-L). ATP is bound by residues I23, R24, G65, K68, T69, T70, 131 to 133 (EDY), R174, Y184, and R221. Mg(2+) is bound at residue T69. Residues 185 to 255 (NVKDLTDIVA…IAARAMDMLD (71 aa)) are small ATPAse domain (RuvB-S). Residues 258 to 336 (NEGFDFMDRK…HFGLQRPDEG (79 aa)) are head domain (RuvB-H). DNA contacts are provided by R313 and R318.

It belongs to the RuvB family. Homohexamer. Forms an RuvA(8)-RuvB(12)-Holliday junction (HJ) complex. HJ DNA is sandwiched between 2 RuvA tetramers; dsDNA enters through RuvA and exits via RuvB. An RuvB hexamer assembles on each DNA strand where it exits the tetramer. Each RuvB hexamer is contacted by two RuvA subunits (via domain III) on 2 adjacent RuvB subunits; this complex drives branch migration. In the full resolvosome a probable DNA-RuvA(4)-RuvB(12)-RuvC(2) complex forms which resolves the HJ.

The protein resides in the cytoplasm. The catalysed reaction is ATP + H2O = ADP + phosphate + H(+). The RuvA-RuvB-RuvC complex processes Holliday junction (HJ) DNA during genetic recombination and DNA repair, while the RuvA-RuvB complex plays an important role in the rescue of blocked DNA replication forks via replication fork reversal (RFR). RuvA specifically binds to HJ cruciform DNA, conferring on it an open structure. The RuvB hexamer acts as an ATP-dependent pump, pulling dsDNA into and through the RuvAB complex. RuvB forms 2 homohexamers on either side of HJ DNA bound by 1 or 2 RuvA tetramers; 4 subunits per hexamer contact DNA at a time. Coordinated motions by a converter formed by DNA-disengaged RuvB subunits stimulates ATP hydrolysis and nucleotide exchange. Immobilization of the converter enables RuvB to convert the ATP-contained energy into a lever motion, pulling 2 nucleotides of DNA out of the RuvA tetramer per ATP hydrolyzed, thus driving DNA branch migration. The RuvB motors rotate together with the DNA substrate, which together with the progressing nucleotide cycle form the mechanistic basis for DNA recombination by continuous HJ branch migration. Branch migration allows RuvC to scan DNA until it finds its consensus sequence, where it cleaves and resolves cruciform DNA. The sequence is that of Holliday junction branch migration complex subunit RuvB from Aeromonas hydrophila subsp. hydrophila (strain ATCC 7966 / DSM 30187 / BCRC 13018 / CCUG 14551 / JCM 1027 / KCTC 2358 / NCIMB 9240 / NCTC 8049).